The sequence spans 294 residues: 2-methoxy-6-polyprenyl-1,4-benzoquinol methylase, mitochondrial (294 aa).

A mitochondrion-targeting transit peptide spans 1–10 (MALRSAAGRL). S-adenosyl-L-methionine-binding positions include Thr-100, Asp-136, and 166–167 (DA).

The protein belongs to the class I-like SAM-binding methyltransferase superfamily. MenG/UbiE family. As to quaternary structure, component of a multi-subunit COQ enzyme complex.

Its subcellular location is the mitochondrion inner membrane. The catalysed reaction is a 2-methoxy-6-(all-trans-polyprenyl)benzene-1,4-diol + S-adenosyl-L-methionine = a 5-methoxy-2-methyl-3-(all-trans-polyprenyl)benzene-1,4-diol + S-adenosyl-L-homocysteine + H(+). It functions in the pathway cofactor biosynthesis; ubiquinone biosynthesis. Its function is as follows. Methyltransferase required for the conversion of 2-polyprenyl-6-methoxy-1,4-benzoquinol (DDMQH2) to 2-polyprenyl-3-methyl-6-methoxy-1,4-benzoquinol (DMQH2). This Oryza sativa subsp. japonica (Rice) protein is 2-methoxy-6-polyprenyl-1,4-benzoquinol methylase, mitochondrial.